The primary structure comprises 293 residues: Pantothenate synthetase (293 aa).

An ATP-binding site is contributed by 30 to 37 (MGYLHKGH). H37 acts as the Proton donor in catalysis. Q61 contributes to the (R)-pantoate binding site. Position 61 (Q61) interacts with beta-alanine. 147–150 (GEKD) lines the ATP pocket. Q153 serves as a coordination point for (R)-pantoate. ATP contacts are provided by residues V176 and 184-187 (CSSR).

This sequence belongs to the pantothenate synthetase family. Homodimer.

It is found in the cytoplasm. It catalyses the reaction (R)-pantoate + beta-alanine + ATP = (R)-pantothenate + AMP + diphosphate + H(+). Its pathway is cofactor biosynthesis; (R)-pantothenate biosynthesis; (R)-pantothenate from (R)-pantoate and beta-alanine: step 1/1. Its function is as follows. Catalyzes the condensation of pantoate with beta-alanine in an ATP-dependent reaction via a pantoyl-adenylate intermediate. The sequence is that of Pantothenate synthetase from Brucella melitensis biotype 2 (strain ATCC 23457).